The following is a 1050-amino-acid chain: Probable E3 ubiquitin-protein ligase HERC3 (1050 aa).

RCC1 repeat units lie at residues 1–51 (MLCW…FLLE), 52–101 (DGEV…ALSD), 102–154 (RGQL…ALAA), 156–207 (GQFF…ALSL), 208–259 (SGAV…VLTK), 261–311 (GGVF…AFVP), and 313–366 (SGLI…IVKQ). The region spanning 951–1050 (YKGDYSATHP…LDNYEGFSLA (100 aa)) is the HECT domain. The Glycyl thioester intermediate role is filled by Cys1018.

Post-translationally, ubiquitinated; which promotes degradation by the proteasome.

The protein localises to the cytoplasm. The protein resides in the cytoplasmic vesicle. It catalyses the reaction S-ubiquitinyl-[E2 ubiquitin-conjugating enzyme]-L-cysteine + [acceptor protein]-L-lysine = [E2 ubiquitin-conjugating enzyme]-L-cysteine + N(6)-ubiquitinyl-[acceptor protein]-L-lysine.. The protein operates within protein modification; protein ubiquitination. E3 ubiquitin-protein ligase which accepts ubiquitin from an E2 ubiquitin-conjugating enzyme in the form of a thioester and then directly transfers the ubiquitin to targeted substrates. This chain is Probable E3 ubiquitin-protein ligase HERC3 (HERC3), found in Homo sapiens (Human).